The sequence spans 70 residues: Large ribosomal subunit protein bL31 (70 aa).

It belongs to the bacterial ribosomal protein bL31 family. Type A subfamily. In terms of assembly, part of the 50S ribosomal subunit.

In terms of biological role, binds the 23S rRNA. This Chlorobium chlorochromatii (strain CaD3) protein is Large ribosomal subunit protein bL31.